We begin with the raw amino-acid sequence, 735 residues long: Protein-associating with the carboxyl-terminal domain of ezrin (735 aa).

The N-myristoyl glycine moiety is linked to residue glycine 2. One can recognise a Protein kinase domain in the interval 2 to 245 (GSENSALKSY…LSTLLSHDFF (244 aa)). HEAT repeat units follow at residues 194 to 249 (FGAL…RNDF), 285 to 323 (LIAS…NAPG), 333 to 370 (LFQS…HFTQ), and 372 to 409 (QLKK…LLGP). Residue serine 439 is modified to Phosphoserine. 2 disordered regions span residues 505 to 545 (LSDV…ASIH) and 604 to 648 (VPLT…GLGL). Acidic residues predominate over residues 528-538 (WPDWSEPEEPE). The tract at residues 547-735 (WPREPCDVAE…EELAWEDNNW (189 aa)) is interaction with EZR. A Phosphoserine modification is found at serine 701.

It belongs to the protein kinase superfamily. Interacts with EZR/VIL2 C-terminal domain. Post-translationally, may be myristoylated; myristoylation may target it to Golgi compartment.

The protein localises to the cytoplasm. The protein resides in the golgi apparatus. It is found in the cell projection. Its subcellular location is the lamellipodium. In terms of biological role, may play a role in regulating cell adhesion/migration complexes in migrating cells. In Mus musculus (Mouse), this protein is Protein-associating with the carboxyl-terminal domain of ezrin (Scyl3).